A 273-amino-acid polypeptide reads, in one-letter code: Glutamate racemase (273 aa).

Substrate-binding positions include 19–20 and 51–52; these read DS and YG. Cys-83 (proton donor/acceptor) is an active-site residue. 84-85 contributes to the substrate binding site; the sequence is NT. The active-site Proton donor/acceptor is the Cys-198. Substrate is bound at residue 199–200; that stretch reads TH.

It belongs to the aspartate/glutamate racemases family.

The catalysed reaction is L-glutamate = D-glutamate. It participates in cell wall biogenesis; peptidoglycan biosynthesis. In terms of biological role, provides the (R)-glutamate required for cell wall biosynthesis. This chain is Glutamate racemase, found in Agrobacterium fabrum (strain C58 / ATCC 33970) (Agrobacterium tumefaciens (strain C58)).